The sequence spans 410 residues: MAWFQHVKLYIASCINLFTKIQKPYLSMAMDSKECSLLPFELFEEILCRVPTKSLLRLKLTCKRWLALFNDKRFIYKHLALVREHIIRTNQMVKIINPVVGACSSFSLPNKFQVKGEIYTMVPCDGLLLCIFETGSMAVWNPCLNQVRWIFLLNPSFRGCSCYGIGYDGLSRDSYKILRFVNGVFTKNEYANTGSYKPEVDIYELKSNSWKTFKVSLDWHVVLRCKGLSLKGNMYWIAKWNRKPDIFIQSFNFSTETFEPLCSLPVRYDVHNVVALSAFKGDNLSLLHQSKETSKIDVWVTNKVKNGVSILWTKLFSVTRPDLPVLLAFENLSYPVHFIDKNNRIVVCCEEVLADKRNVAVNIYVIGEDEIKSQDEIEQHQLGFSWPFISGYTYLPSLVPVPSSEDNTPE.

In terms of domain architecture, F-box spans S32–L79. WD repeat units lie at residues P109–I150 and D269–S309.

This Arabidopsis thaliana (Mouse-ear cress) protein is F-box/WD-40 repeat-containing protein 1 (FBW1).